Consider the following 387-residue polypeptide: O-methyltransferase asqD (387 aa).

S-adenosyl-L-methionine is bound at residue aspartate 252. The Proton acceptor role is filled by histidine 294.

This sequence belongs to the class I-like SAM-binding methyltransferase superfamily. Cation-independent O-methyltransferase family.

Its pathway is secondary metabolite biosynthesis. It functions in the pathway alkaloid biosynthesis. The protein operates within mycotoxin biosynthesis. O-methyltransferase; part of the gene cluster that mediates the biosynthesis of the aspoquinolone mycotoxins. The role of asqD within the aspoquinolone pathway has still to be determined. The first step of the pathway is catalyzed by the nonribosomal peptide synthetase asqK that condenses anthranilic acid and O-methyl-L-tyrosine to produce 4'-methoxycyclopeptin. 4'-methoxycyclopeptin is then converted to 4'-methoxydehydrocyclopeptin by the ketoglutarate-dependent dioxygenase asqJ. AsqJ also converts its first product 4'-methoxydehydrocyclopeptin to 4'-methoxycyclopenin. The following conversion of 4'-methoxycyclopenin into 4'-methoxyviridicatin is catalyzed by the cyclopenase asqI. 4'-methoxyviridicatin is the precursor of quinolone natural products, and is further converted to quinolinone B. The prenyltransferase asqH1 then catalyzes the canonical Friedel-Crafts alkylation of quinolinone B with dimethylallyl cation to yield dimethylallyl quinolone, which is subjected to FAD-dependent dehydrogenation by the FAD-linked oxidoreductase asqF to yield conjugated aryl diene. The delta(3') double bond then serves as the site of the second alkylation with DMAPP catalyzed by the prenyltransferase asqH2 to yield a carbenium ion intermediate, which can be attacked by H(2)O to yield a styrenyl quinolone containing a C3'-hydroxyprenyl chain. The FAD-dependent monooxygenase asqG performs epoxidation of the terminal C7'-C8' olefin. Finally, after dehydratation of the epoxide at C3 by asqC, the quinolone epoxide rearrangement protein asqO catalyzes an enzymatic 3-exo-tet cyclization to yield the cyclopropyl-THF ring system in aspoquinolone. The polypeptide is O-methyltransferase asqD (Emericella nidulans (strain FGSC A4 / ATCC 38163 / CBS 112.46 / NRRL 194 / M139) (Aspergillus nidulans)).